The primary structure comprises 198 residues: MYYPEPISKLIDSFMKLPGIGPKTAVRLAFFVLNMKEDVVLDFAKALVNAKRNLTYCSSCGHITDKDPCYICEDDKRDRSIICVVQDPKDVIAMEKMKEYNGLYHVLHGAISPMEGIGPEDIKIAELLRRLQDETVQEVILATNPNIEGEATAMYISRLLKPTGVKITRIAHGLPVGGDLEYADEVTLSKALEGRREL.

A C4-type zinc finger spans residues 57–72 (CSSCGHITDKDPCYIC). Residues 80-175 (SIICVVQDPK…KITRIAHGLP (96 aa)) form the Toprim domain.

The protein belongs to the RecR family.

In terms of biological role, may play a role in DNA repair. It seems to be involved in an RecBC-independent recombinational process of DNA repair. It may act with RecF and RecO. In Anoxybacillus flavithermus (strain DSM 21510 / WK1), this protein is Recombination protein RecR.